The chain runs to 195 residues: Probable nicotinate-nucleotide adenylyltransferase (195 aa).

Belongs to the NadD family.

It catalyses the reaction nicotinate beta-D-ribonucleotide + ATP + H(+) = deamido-NAD(+) + diphosphate. Its pathway is cofactor biosynthesis; NAD(+) biosynthesis; deamido-NAD(+) from nicotinate D-ribonucleotide: step 1/1. Catalyzes the reversible adenylation of nicotinate mononucleotide (NaMN) to nicotinic acid adenine dinucleotide (NaAD). This is Probable nicotinate-nucleotide adenylyltransferase from Mesorhizobium japonicum (strain LMG 29417 / CECT 9101 / MAFF 303099) (Mesorhizobium loti (strain MAFF 303099)).